The sequence spans 388 residues: Succinate--CoA ligase [ADP-forming] subunit beta (388 aa).

The region spanning 9 to 244 is the ATP-grasp domain; sequence KGVLSSFGVT…PDEYAAEELE (236 aa). ATP-binding positions include Lys-46, 53 to 55, Glu-99, Val-102, and Glu-107; that span reads GRG. Mg(2+) is bound by residues Asn-199 and Asp-213. Substrate is bound by residues Asn-264 and 320 to 322; that span reads GIM.

It belongs to the succinate/malate CoA ligase beta subunit family. As to quaternary structure, heterotetramer of two alpha and two beta subunits. Mg(2+) serves as cofactor.

It carries out the reaction succinate + ATP + CoA = succinyl-CoA + ADP + phosphate. The catalysed reaction is GTP + succinate + CoA = succinyl-CoA + GDP + phosphate. Its pathway is carbohydrate metabolism; tricarboxylic acid cycle; succinate from succinyl-CoA (ligase route): step 1/1. Functionally, succinyl-CoA synthetase functions in the citric acid cycle (TCA), coupling the hydrolysis of succinyl-CoA to the synthesis of either ATP or GTP and thus represents the only step of substrate-level phosphorylation in the TCA. The beta subunit provides nucleotide specificity of the enzyme and binds the substrate succinate, while the binding sites for coenzyme A and phosphate are found in the alpha subunit. The sequence is that of Succinate--CoA ligase [ADP-forming] subunit beta from Anaplasma marginale (strain St. Maries).